A 186-amino-acid polypeptide reads, in one-letter code: MISSNDFRTGTSIELDGSVWRVVEFLHVKPGKGSAFVRTKLKAVQSGSVVEKTFRAGEMLPQALLEKSTLQHTYMESGDYVFMDMSSYEETRLTAQQIGDSRKYLKEGMEVNVVSWNGNPLEVELPNSVVLEITETDPGVKGDTATGGTKPAILETGAQVMVPLFLSVGEKIKVDTRNDSYLGREN.

The protein belongs to the elongation factor P family.

The protein localises to the cytoplasm. Its pathway is protein biosynthesis; polypeptide chain elongation. Functionally, involved in peptide bond synthesis. Stimulates efficient translation and peptide-bond synthesis on native or reconstituted 70S ribosomes in vitro. Probably functions indirectly by altering the affinity of the ribosome for aminoacyl-tRNA, thus increasing their reactivity as acceptors for peptidyl transferase. This chain is Elongation factor P, found in Prochlorococcus marinus (strain MIT 9303).